Here is a 300-residue protein sequence, read N- to C-terminus: Protoheme IX farnesyltransferase 1 (300 aa).

Helical transmembrane passes span 28 to 48 (VVAL…PGAV), 50 to 70 (VQPL…AAAY), 106 to 126 (AMAI…TAWL), 150 to 170 (IVVG…AITG), 176 to 196 (ALLL…ALAI), 222 to 242 (CIML…LVGM), 243 to 263 (CGPL…YKAW), and 280 to 300 (FSIY…YLWS).

This sequence belongs to the UbiA prenyltransferase family. Protoheme IX farnesyltransferase subfamily.

The protein localises to the cell inner membrane. The enzyme catalyses heme b + (2E,6E)-farnesyl diphosphate + H2O = Fe(II)-heme o + diphosphate. Its pathway is porphyrin-containing compound metabolism; heme O biosynthesis; heme O from protoheme: step 1/1. Its function is as follows. Converts heme B (protoheme IX) to heme O by substitution of the vinyl group on carbon 2 of heme B porphyrin ring with a hydroxyethyl farnesyl side group. The polypeptide is Protoheme IX farnesyltransferase 1 (Shewanella loihica (strain ATCC BAA-1088 / PV-4)).